We begin with the raw amino-acid sequence, 115 residues long: Large ribosomal subunit protein uL24 (115 aa).

The protein belongs to the universal ribosomal protein uL24 family. Part of the 50S ribosomal subunit.

In terms of biological role, one of two assembly initiator proteins, it binds directly to the 5'-end of the 23S rRNA, where it nucleates assembly of the 50S subunit. Its function is as follows. One of the proteins that surrounds the polypeptide exit tunnel on the outside of the subunit. The chain is Large ribosomal subunit protein uL24 from Phytoplasma mali (strain AT).